The following is a 375-amino-acid chain: Alcohol dehydrogenase 1 (375 aa).

S2 carries the N-acetylserine modification. Residues C47, H68, C98, C101, C104, C112, and C175 each contribute to the Zn(2+) site. Residues 200–205 (GLGGVG), D224, and K229 contribute to the NAD(+) site. K234 is modified (N6-succinyllysine). Position 293–295 (293–295 (VGV)) interacts with NAD(+). K340 bears the N6-succinyllysine mark. Residue R370 coordinates NAD(+).

The protein belongs to the zinc-containing alcohol dehydrogenase family. As to quaternary structure, homodimer. It depends on Zn(2+) as a cofactor.

The protein resides in the cytoplasm. It carries out the reaction a primary alcohol + NAD(+) = an aldehyde + NADH + H(+). It catalyses the reaction a secondary alcohol + NAD(+) = a ketone + NADH + H(+). The sequence is that of Alcohol dehydrogenase 1 (ADH1) from Oryctolagus cuniculus (Rabbit).